We begin with the raw amino-acid sequence, 75 residues long: UPF0291 protein lmo1304 (75 aa).

The interval 56–75 is disordered; the sequence is DPNGKDVTPHKVKQLRKNKY. The segment covering 65 to 75 has biased composition (basic residues); the sequence is HKVKQLRKNKY.

It belongs to the UPF0291 family.

Its subcellular location is the cytoplasm. This chain is UPF0291 protein lmo1304, found in Listeria monocytogenes serovar 1/2a (strain ATCC BAA-679 / EGD-e).